Consider the following 537-residue polypeptide: Cytochrome P450 CYP12A2 (537 aa).

Cys483 contacts heme.

Belongs to the cytochrome P450 family. Heme is required as a cofactor.

The polypeptide is Cytochrome P450 CYP12A2 (CYP12A2) (Musca domestica (House fly)).